The sequence spans 429 residues: Dihydroorotase (429 aa).

Zn(2+) is bound by residues histidine 62 and histidine 64. Residues 64–66 and asparagine 96 each bind substrate; that span reads HFR. Positions 154, 181, and 234 each coordinate Zn(2+). Asparagine 280 lines the substrate pocket. Aspartate 307 contacts Zn(2+). Residue aspartate 307 is part of the active site. Residues histidine 311 and 325–326 each bind substrate; that span reads FG.

It belongs to the metallo-dependent hydrolases superfamily. DHOase family. Class I DHOase subfamily. The cofactor is Zn(2+).

It carries out the reaction (S)-dihydroorotate + H2O = N-carbamoyl-L-aspartate + H(+). It functions in the pathway pyrimidine metabolism; UMP biosynthesis via de novo pathway; (S)-dihydroorotate from bicarbonate: step 3/3. Functionally, catalyzes the reversible cyclization of carbamoyl aspartate to dihydroorotate. This is Dihydroorotase from Latilactobacillus sakei subsp. sakei (strain 23K) (Lactobacillus sakei subsp. sakei).